A 2946-amino-acid polypeptide reads, in one-letter code: Neurobeachin (2946 aa).

The interval 971 to 995 is disordered; sequence ENIKKGKKGNVSTISGLSSQTTGAK. Polar residues predominate over residues 980–993; sequence NVSTISGLSSQTTG. Phosphoserine occurs at positions 1011 and 1014. The stretch at 1326 to 1368 is one WD 1 repeat; that stretch reads TTMFRIPEFKWSPMHQRLLTDLLFALETDVHVWRSHSTKSVMD. Disordered stretches follow at residues 1490 to 1531, 1651 to 1675, 1711 to 1731, and 1841 to 1860; these read QRDR…LSPI, TIKE…HTDS, VKKS…PATS, and GAVD…VNGA. Positions 1497–1517 are enriched in polar residues; it reads SSHGSSKPQEVPQSVTATAAS. Ser1529 carries the post-translational modification Phosphoserine. A phosphoserine mark is found at Ser1714 and Ser1717. Over residues 1716–1731 the composition is skewed to polar residues; that stretch reads ESLTENPSETLKPATS. Residues 1845-1855 show a composition bias toward low complexity; that stretch reads SGSSSSSSSSS. Phosphoserine is present on Ser2138. The BEACH-type PH domain occupies 2147 to 2255; it reads NLAGPVVLST…TVKKVVYSLP (109 aa). In terms of domain architecture, BEACH spans 2274–2563; the sequence is ATPRQLYKSS…QLLIEPHPPR (290 aa). Ser2575 carries the phosphoserine modification. 4 WD repeats span residues 2718–2761, 2778–2818, 2860–2899, and 2902–2941; these read GHWD…HIIG, GHDH…RALE, EIND…QLYI, and GCDA…WHYE.

The protein belongs to the WD repeat neurobeachin family. Interacts with RII subunit of PKA. Predominant in many brain structures. Also expressed at medium levels in spleen, thymus, prostate, testis and ovary. Low level expression is seen in heart, kidney, pancreas, skeletal muscle and intestine.

It localises to the cytoplasm. The protein localises to the membrane. Binds to type II regulatory subunits of protein kinase A and anchors/targets them to the membrane. May anchor the kinase to cytoskeletal and/or organelle-associated proteins. This is Neurobeachin from Homo sapiens (Human).